A 573-amino-acid polypeptide reads, in one-letter code: Membrane protein insertase YidC (573 aa).

Residues 6–26 (VFLIFAWLMVAALLWMEWGKD) traverse the membrane as a helical segment. The tract at residues 63–82 (PQAGSPAAVPATSTTTATPA) is disordered. 5 helical membrane-spanning segments follow: residues 355–375 (FSIM…LHSF), 379–399 (WGWA…PLSA), 446–466 (GGCL…WVLV), 488–508 (PYFI…KLTP), and 524–544 (PLVF…YWVV).

This sequence belongs to the OXA1/ALB3/YidC family. Type 1 subfamily. Interacts with the Sec translocase complex via SecD. Specifically interacts with transmembrane segments of nascent integral membrane proteins during membrane integration.

It localises to the cell inner membrane. Required for the insertion and/or proper folding and/or complex formation of integral membrane proteins into the membrane. Involved in integration of membrane proteins that insert both dependently and independently of the Sec translocase complex, as well as at least some lipoproteins. Aids folding of multispanning membrane proteins. In Xanthomonas campestris pv. campestris (strain 8004), this protein is Membrane protein insertase YidC.